Consider the following 522-residue polypeptide: Leucine-rich repeat transmembrane neuronal protein 1 (522 aa).

The first 34 residues, 1–34, serve as a signal peptide directing secretion; that stretch reads MDFLLLGLCLYWLLRRPSGVVLCLLGACFQMLPA. In terms of domain architecture, LRRNT spans 35–63; that stretch reads APSGCPQLCRCEGRLLYCEALNPTEAPHN. The Extracellular portion of the chain corresponds to 35 to 427; sequence APSGCPQLCR…HAENAVQIHK (393 aa). N-linked (GlcNAc...) asparagine glycosylation is present at Asn63. LRR repeat units follow at residues 64–87, 89–111, 112–135, 137–159, 161–183, 184–207, 209–231, 233–255, 256–278, and 279–302; these read LSGL…QFTG, MQLT…AFQK, LRRV…TFRP, PNLR…LFHG, RKLT…IFQD, CRSL…SFAG, FKLT…HFPR, ISLH…LDWV, WNLK…VFET, and VPHL…ILNS. N-linked (GlcNAc...) asparagine glycosylation occurs at Asn130. In terms of domain architecture, LRRCT spans 314-365; that stretch reads NLWDCGRNVCALASWLSNFQGRYDGNLQCASPEYAQGEDVLDAVYAFHLCED. An N-linked (GlcNAc...) asparagine glycan is attached at Asn380. The interval 382 to 401 is disordered; sequence SDLGPPASSATTLADGGEGQ. Residues 428–448 traverse the membrane as a helical segment; sequence VVTGTMALIFSFLIVVLVLYV. Residues 449–522 are Cytoplasmic-facing; that stretch reads SWKCFPASLR…HQQPARECEV (74 aa).

This sequence belongs to the LRRTM family.

It is found in the cell membrane. Its subcellular location is the postsynaptic cell membrane. In terms of biological role, exhibits strong synaptogenic activity, restricted to excitatory presynaptic differentiation, acting at both pre- and postsynaptic level. This chain is Leucine-rich repeat transmembrane neuronal protein 1 (LRRTM1), found in Pongo abelii (Sumatran orangutan).